The primary structure comprises 394 residues: Argininosuccinate synthase (394 aa).

ATP is bound at residue 8–16 (AYSGGLDTS). Tyrosine 86 and serine 91 together coordinate L-citrulline. Glycine 116 serves as a coordination point for ATP. L-aspartate-binding residues include threonine 118, asparagine 122, and aspartate 123. Asparagine 122 is an L-citrulline binding site. L-citrulline is bound by residues arginine 126, serine 172, serine 181, glutamate 257, and tyrosine 269.

The protein belongs to the argininosuccinate synthase family. Type 1 subfamily. Homotetramer.

It localises to the cytoplasm. It carries out the reaction L-citrulline + L-aspartate + ATP = 2-(N(omega)-L-arginino)succinate + AMP + diphosphate + H(+). Its pathway is amino-acid biosynthesis; L-arginine biosynthesis; L-arginine from L-ornithine and carbamoyl phosphate: step 2/3. This is Argininosuccinate synthase from Methanosarcina acetivorans (strain ATCC 35395 / DSM 2834 / JCM 12185 / C2A).